The sequence spans 318 residues: 4-diphosphocytidyl-2-C-methyl-D-erythritol kinase (318 aa).

Residue Lys25 is part of the active site. Residue 110–120 (PVAGGMAGGSA) participates in ATP binding. Asp152 is a catalytic residue.

This sequence belongs to the GHMP kinase family. IspE subfamily.

It carries out the reaction 4-CDP-2-C-methyl-D-erythritol + ATP = 4-CDP-2-C-methyl-D-erythritol 2-phosphate + ADP + H(+). The protein operates within isoprenoid biosynthesis; isopentenyl diphosphate biosynthesis via DXP pathway; isopentenyl diphosphate from 1-deoxy-D-xylulose 5-phosphate: step 3/6. Functionally, catalyzes the phosphorylation of the position 2 hydroxy group of 4-diphosphocytidyl-2C-methyl-D-erythritol. This Mycobacterium tuberculosis (strain ATCC 25177 / H37Ra) protein is 4-diphosphocytidyl-2-C-methyl-D-erythritol kinase.